A 466-amino-acid polypeptide reads, in one-letter code: Ribulose bisphosphate carboxylase (466 aa).

N111 is a binding site for substrate. The active-site Proton acceptor is the K166. Residue K168 participates in substrate binding. Mg(2+) contacts are provided by K191, D193, and E194. K191 bears the N6-carboxylysine mark. The Proton acceptor role is filled by H287. 3 residues coordinate substrate: R288, H321, and S368.

The protein belongs to the RuBisCO large chain family. Type II subfamily. In terms of assembly, homodimer. It depends on Mg(2+) as a cofactor.

It carries out the reaction 2 (2R)-3-phosphoglycerate + 2 H(+) = D-ribulose 1,5-bisphosphate + CO2 + H2O. The enzyme catalyses D-ribulose 1,5-bisphosphate + O2 = 2-phosphoglycolate + (2R)-3-phosphoglycerate + 2 H(+). Its function is as follows. RuBisCO catalyzes two reactions: the carboxylation of D-ribulose 1,5-bisphosphate, the primary event in carbon dioxide fixation, as well as the oxidative fragmentation of the pentose substrate. Both reactions occur simultaneously and in competition at the same active site. This Rhodospirillum rubrum protein is Ribulose bisphosphate carboxylase (cbbM).